A 562-amino-acid chain; its full sequence is Urocanate hydratase (562 aa).

NAD(+) is bound by residues 53–54 (GG), Gln-131, 177–179 (GMG), Glu-197, Arg-202, 243–244 (NA), 268–272 (QTSAH), 278–279 (YL), and Tyr-327. Cys-415 is an active-site residue. Gly-497 contacts NAD(+).

Belongs to the urocanase family. It depends on NAD(+) as a cofactor.

It localises to the cytoplasm. The enzyme catalyses 4-imidazolone-5-propanoate = trans-urocanate + H2O. Its pathway is amino-acid degradation; L-histidine degradation into L-glutamate; N-formimidoyl-L-glutamate from L-histidine: step 2/3. Its function is as follows. Catalyzes the conversion of urocanate to 4-imidazolone-5-propionate. The chain is Urocanate hydratase from Chelativorans sp. (strain BNC1).